The chain runs to 100 residues: Large ribosomal subunit protein bL28 (100 aa).

The protein belongs to the bacterial ribosomal protein bL28 family.

The chain is Large ribosomal subunit protein bL28 from Gluconacetobacter diazotrophicus (strain ATCC 49037 / DSM 5601 / CCUG 37298 / CIP 103539 / LMG 7603 / PAl5).